Reading from the N-terminus, the 542-residue chain is Delta 8-(E)-sphingolipid desaturase (542 aa).

The region spanning methionine 1 to lysine 75 is the Cytochrome b5 heme-binding domain. Residues histidine 35 and histidine 58 each contribute to the heme site. Transmembrane regions (helical) follow at residues tryptophan 215–histidine 235 and isoleucine 248–tryptophan 268. Residues histidine 235–histidine 239 carry the Histidine box-1 motif. The short motif at histidine 272–histidine 276 is the Histidine box-2 element. 3 helical membrane-spanning segments follow: residues leucine 329–tryptophan 346, alanine 360–tyrosine 380, and phenylalanine 393–serine 413. The Histidine box-3 signature appears at glutamine 455 to histidine 459.

The protein belongs to the fatty acid desaturase type 1 family.

The protein resides in the membrane. The catalysed reaction is an N-acylsphing-4-enine + 2 Fe(II)-[cytochrome b5] + O2 + 2 H(+) = a (4E,8E)-4-sphinga-4,8-dienine ceramide + 2 Fe(III)-[cytochrome b5] + 2 H2O. Its pathway is lipid metabolism; sphingolipid metabolism. Functionally, delta(8)-fatty-acid desaturase which introduces a double bond at the 8-position in the long-chain base (LCB) of ceramides. Required for the formation of the di-unsaturated sphingoid base (E,E)-sphinga-4,8-dienine during glucosylceramide (GluCer) biosynthesis. In Komagataella phaffii (strain GS115 / ATCC 20864) (Yeast), this protein is Delta 8-(E)-sphingolipid desaturase.